The primary structure comprises 369 residues: Flagellar P-ring protein (369 aa).

An N-terminal signal peptide occupies residues 1 to 22 (MIKLKQLIAATLLLSTAFGVHA).

Belongs to the FlgI family. The basal body constitutes a major portion of the flagellar organelle and consists of four rings (L,P,S, and M) mounted on a central rod.

The protein localises to the periplasm. Its subcellular location is the bacterial flagellum basal body. Its function is as follows. Assembles around the rod to form the L-ring and probably protects the motor/basal body from shearing forces during rotation. The chain is Flagellar P-ring protein from Pseudomonas savastanoi pv. phaseolicola (strain 1448A / Race 6) (Pseudomonas syringae pv. phaseolicola (strain 1448A / Race 6)).